A 204-amino-acid polypeptide reads, in one-letter code: Leucyl/phenylalanyl-tRNA--protein transferase (204 aa).

It belongs to the L/F-transferase family.

It is found in the cytoplasm. The enzyme catalyses N-terminal L-lysyl-[protein] + L-leucyl-tRNA(Leu) = N-terminal L-leucyl-L-lysyl-[protein] + tRNA(Leu) + H(+). It catalyses the reaction N-terminal L-arginyl-[protein] + L-leucyl-tRNA(Leu) = N-terminal L-leucyl-L-arginyl-[protein] + tRNA(Leu) + H(+). The catalysed reaction is L-phenylalanyl-tRNA(Phe) + an N-terminal L-alpha-aminoacyl-[protein] = an N-terminal L-phenylalanyl-L-alpha-aminoacyl-[protein] + tRNA(Phe). Functions in the N-end rule pathway of protein degradation where it conjugates Leu, Phe and, less efficiently, Met from aminoacyl-tRNAs to the N-termini of proteins containing an N-terminal arginine or lysine. The protein is Leucyl/phenylalanyl-tRNA--protein transferase of Rhizobium meliloti (strain 1021) (Ensifer meliloti).